The following is a 398-amino-acid chain: Trans-2-enoyl-CoA reductase [NADH] (398 aa).

NAD(+)-binding positions include 47–52 (GASSGF), 74–75 (FE), 111–112 (DA), and 139–140 (LA). Y225 lines the substrate pocket. Y235 serves as the catalytic Proton donor. NAD(+)-binding positions include K244 and 274 to 276 (IVT).

It belongs to the TER reductase family. Monomer.

It carries out the reaction a 2,3-saturated acyl-CoA + NAD(+) = a (2E)-enoyl-CoA + NADH + H(+). Its pathway is lipid metabolism; fatty acid biosynthesis. Involved in the fatty acid synthesis (FAS II). Catalyzes the reduction of a carbon-carbon double bond in an enoyl moiety that is covalently linked to a coenzyme A (CoA). The protein is Trans-2-enoyl-CoA reductase [NADH] of Clostridium beijerinckii (strain ATCC 51743 / NCIMB 8052) (Clostridium acetobutylicum).